Consider the following 227-residue polypeptide: Prolactin-4A1 (227 aa).

The first 31 residues, 1–31 (MHLSLTPQWSSWTVLLLLVSNLLLWENTASA), serve as a signal peptide directing secretion. 2 cysteine pairs are disulfide-bonded: C87–C203 and C220–C227. N-linked (GlcNAc...) asparagine glycosylation occurs at N175.

This sequence belongs to the somatotropin/prolactin family. As to expression, expressed specifically in placenta. Expressed in both trophoblast giant cells and spongiotrophoblast cells.

It localises to the secreted. The sequence is that of Prolactin-4A1 (Prl4a1) from Mus musculus (Mouse).